Here is a 20-residue protein sequence, read N- to C-terminus: Putative phosphoglycerate kinase (20 aa).

The protein belongs to the phosphoglycerate kinase family. In terms of assembly, monomer.

The protein localises to the cytoplasm. The enzyme catalyses (2R)-3-phosphoglycerate + ATP = (2R)-3-phospho-glyceroyl phosphate + ADP. The protein operates within carbohydrate degradation; glycolysis; pyruvate from D-glyceraldehyde 3-phosphate: step 2/5. The protein is Putative phosphoglycerate kinase (pgk) of Clostridium pasteurianum.